The primary structure comprises 160 residues: MSRRHAAEKRVILPDMKYNSILLSRFINNIMKEGKKALAEKIVYSAFNKIEKKHRVDPYQAFNNAMHNVKPHLEVTSVRVGGANYQVPTHVDERRGYALASRWIINAASKRSEKMMIDKLAEELFEASNNRGVAIKKKEDTHKMAEANKAFSHFSPKKMK.

The protein belongs to the universal ribosomal protein uS7 family. Part of the 30S ribosomal subunit. Contacts proteins S9 and S11.

One of the primary rRNA binding proteins, it binds directly to 16S rRNA where it nucleates assembly of the head domain of the 30S subunit. Is located at the subunit interface close to the decoding center, probably blocks exit of the E-site tRNA. In Rickettsia rickettsii (strain Iowa), this protein is Small ribosomal subunit protein uS7.